The chain runs to 401 residues: cAMP-dependent protein kinase type II-alpha regulatory subunit (401 aa).

Ser-2 carries the post-translational modification N-acetylserine. Residues 2–135 form a dimerization and phosphorylation region; the sequence is SHIQIPPGLT…RLQEACKDIL (134 aa). A disordered region spans residues 43-65; it reads ARSRASTPPAAPPSGSQDFDPGA. A compositionally biased stretch (low complexity) spans 46–58; sequence RASTPPAAPPSGS. Phosphoserine occurs at positions 48, 75, and 77. Residue Ser-96 is modified to Phosphoserine; by PKA. Residues 136-257, Glu-205, Arg-214, 258-401, Glu-335, and Arg-344 contribute to the 3',5'-cyclic AMP site; these read LFKN…ESVP and LLKS…DPGQ. Thr-212 carries the phosphothreonine; by PDPK1 modification. 2 positions are modified to phosphoserine: Ser-347 and Ser-392.

Belongs to the cAMP-dependent kinase regulatory chain family. The inactive form of the enzyme is composed of two regulatory chains and two catalytic chains. Activation by cAMP produces two active catalytic monomers and a regulatory dimer that binds four cAMP molecules. Interacts with AKAP4 and CBFA2T3. Interacts with the phosphorylated form of PJA2. Interacts with MYRIP; this interaction may link PKA to components of the exocytosis machinery, thus facilitating exocytosis, including insulin release. Forms a complex composed of PRKAR2A, GSK3B and GSKIP through GSKIP interaction; facilitates PKA-induced phosphorylation and regulates GSK3B activity. Interacts with ADCY8; inhibits adenylate cyclase activity through PKA phosphorylation. A second phosphorylation site has not been located. Post-translationally, phosphorylation of Thr-212 by PDPK1 seems to attenuate the activity of PKA, perhaps by strengthening interaction between the regulatory and the catalytic subunits. In terms of tissue distribution, four types of regulatory chains are found: I-alpha, I-beta, II-alpha, and II-beta. Their expression varies among tissues and is in some cases constitutive and in others inducible.

Its subcellular location is the cytoplasm. It localises to the cell membrane. Its function is as follows. Regulatory subunit of the cAMP-dependent protein kinases involved in cAMP signaling in cells. Type II regulatory chains mediate membrane association by binding to anchoring proteins, including the MAP2 kinase. The protein is cAMP-dependent protein kinase type II-alpha regulatory subunit (PRKAR2A) of Bos taurus (Bovine).